The chain runs to 688 residues: Telomere length regulation protein TEL2 (688 aa).

Ser-417 and Ser-419 each carry phosphoserine.

It belongs to the TEL2 family. Component of the TTT complex composed of TEL2, TTI1 and TTI2. Interacts with TTI1 and TTI2.

It is found in the nucleus. The protein resides in the chromosome. It localises to the telomere. In terms of biological role, part of the TTT complex that is required to stabilize protein levels of the phosphatidylinositol 3-kinase-related protein kinase (PIKK) family proteins. Required for telomere length regulation and telomere position effect. Regulates telomere length and participates in gene silencing at subtelomeric regions. Binds to telomeric DNA repeats. This Saccharomyces cerevisiae (strain ATCC 204508 / S288c) (Baker's yeast) protein is Telomere length regulation protein TEL2 (TEL2).